The sequence spans 185 residues: Translation initiation factor IF-3 (185 aa).

This sequence belongs to the IF-3 family. In terms of assembly, monomer.

The protein resides in the cytoplasm. Its function is as follows. IF-3 binds to the 30S ribosomal subunit and shifts the equilibrium between 70S ribosomes and their 50S and 30S subunits in favor of the free subunits, thus enhancing the availability of 30S subunits on which protein synthesis initiation begins. In Rickettsia prowazekii (strain Madrid E), this protein is Translation initiation factor IF-3.